A 199-amino-acid chain; its full sequence is Hematopoietic prostaglandin D synthase (199 aa).

A GST N-terminal domain is found at 2 to 79; sequence PNYKLLYFNM…YLTKNTDLAG (78 aa). Residues Y8, R14, W39, 49–51, and 63–64 contribute to the glutathione site; these read GKI and QS. The GST C-terminal domain maps to 81 to 199; the sequence is TALEQCQADA…WILKRPQTKL (119 aa).

The protein belongs to the GST superfamily. Sigma family. In terms of assembly, homodimer. Glutathione serves as cofactor. Expressed in skin and oviduct.

The protein resides in the cytoplasm. The catalysed reaction is prostaglandin H2 = prostaglandin D2. The enzyme catalyses RX + glutathione = an S-substituted glutathione + a halide anion + H(+). It carries out the reaction 2-glyceryl-prostaglandin H2 = 2-glyceryl-prostaglandin D2. Bifunctional enzyme which catalyzes both the conversion of PGH2 to PGD2, a prostaglandin involved in smooth muscle contraction/relaxation and a potent inhibitor of platelet aggregation, and the conjugation of glutathione with a wide range of aryl halides and organic isothiocyanates. Also exhibits low glutathione-peroxidase activity. The polypeptide is Hematopoietic prostaglandin D synthase (Mus musculus (Mouse)).